Reading from the N-terminus, the 156-residue chain is Acyl carrier protein, mitochondrial (156 aa).

Residues 1 to 68 constitute a mitochondrion transit peptide; sequence MASRVLSAYV…GRVTQLCRQY (68 aa). Residues 77–152 enclose the Carrier domain; sequence EGIQDRVLYV…EIVDYIADKK (76 aa). Position 88 is an N6-acetyllysine (K88). O-(pantetheine 4'-phosphoryl)serine is present on S112.

This sequence belongs to the acyl carrier protein (ACP) family. As to quaternary structure, mammalian complex I is composed of 45 different subunits. Interacts with ETFRF1. Identified in a complex composed of MALSU1, MIEF1 upstream open reading frame protein and NDUFAB1; within the trimeric complex, MIEF1 upstream open reading frame protein functions as a bridging scaffold that interacts with MALSU1 on one side, and with NDUFAB1 on the other side. The complex interacts with the mitochondrial large ribosomal subunit. Interacts with alpha-1-microglobulin chain; this interaction is required for the maintenance of mitochondrial redox homeostasis. Component of the mitochondrial core iron-sulfur cluster (ISC) complex composed of NFS1, LYRM4, NDUFAB1, ISCU, FXN, and FDX2; this complex is a heterohexamer containing two copies of each monomer. Component of the cyteine desulfurase complex composed of NFS1, LYRM4 and NDUFAB1; this complex contributes to the stability and cysteine desulfurase activity of NFS1. In terms of processing, phosphopantetheinylation at Ser-112 is essential for interactions with LYR motif-containing proteins.

It localises to the mitochondrion. In terms of biological role, carrier of the growing fatty acid chain in fatty acid biosynthesis. Accessory and non-catalytic subunit of the mitochondrial membrane respiratory chain NADH dehydrogenase (Complex I), which functions in the transfer of electrons from NADH to the respiratory chain. Accessory protein, of the core iron-sulfur cluster (ISC) assembly complex, that regulates, in association with LYRM4, the stability and the cysteine desulfurase activity of NFS1 and participates in the [2Fe-2S] clusters assembly on the scaffolding protein ISCU. The core iron-sulfur cluster (ISC) assembly complex is involved in the de novo synthesis of a [2Fe-2S] cluster, the first step of the mitochondrial iron-sulfur protein biogenesis. This process is initiated by the cysteine desulfurase complex (NFS1:LYRM4:NDUFAB1) that produces persulfide which is delivered on the scaffold protein ISCU in a FXN-dependent manner. Then this complex is stabilized by FDX2 which provides reducing equivalents to accomplish the [2Fe-2S] cluster assembly. Finally, the [2Fe-2S] cluster is transferred from ISCU to chaperone proteins, including HSCB, HSPA9 and GLRX5. The protein is Acyl carrier protein, mitochondrial of Gorilla gorilla gorilla (Western lowland gorilla).